Here is a 242-residue protein sequence, read N- to C-terminus: Beta-carotene ketolase (242 aa).

The catalysed reaction is all-trans-beta-carotene + 2 AH2 + 2 O2 = echinenone + 2 A + 3 H2O. The enzyme catalyses echinenone + 2 AH2 + 2 O2 = canthaxanthin + 2 A + 3 H2O. Its pathway is carotenoid biosynthesis; astaxanthin biosynthesis. Functionally, converts beta-carotene to canthaxanthin via echinenone. The protein is Beta-carotene ketolase of Paracoccus sp. (strain PC1) (Alcaligenes sp. (strain PC1)).